We begin with the raw amino-acid sequence, 1159 residues long: Syntaxin-binding protein 5-like (1159 aa).

The segment at 1-37 (MKKFRKVLDGLTTSSPVNPGGSPGCGSAAGTPSAAPT) is disordered. Over residues 25–37 (CGSAAGTPSAAPT) the composition is skewed to low complexity. 10 WD repeats span residues 67-108 (TALA…CHSQ), 115-154 (VLQM…SLKF), 159-195 (ITFC…GYVI), 214-248 (HLSD…DFRI), 254-286 (IHSV…TAKP), 307-350 (PILK…KAIT), 358-392 (IVDF…VVDL), 414-491 (TCTA…YKLK), 519-628 (QMIS…ELVV), and 642-703 (TCLD…STSG). Disordered regions lie at residues 571 to 604 (SDTE…SVRD) and 690 to 770 (LTRS…KAQS). Composition is skewed to polar residues over residues 699-713 (QSTS…NQVS) and 721-739 (SPTS…SQPC). WD repeat units follow at residues 808–865 (VTTL…TGTV), 874–946 (RFGF…QACL), 951–995 (ITES…LDVS), and 1009–1032 (CFTN…TYSQ). The v-SNARE coiled-coil homology domain occupies 1094–1154 (GIEGMKAAAG…HELMLKCKDK (61 aa)).

It belongs to the WD repeat L(2)GL family.

It is found in the cytoplasm. Its subcellular location is the cell membrane. It localises to the membrane. May play a role in vesicle trafficking and exocytosis. This is Syntaxin-binding protein 5-like (stxbp5l) from Danio rerio (Zebrafish).